We begin with the raw amino-acid sequence, 701 residues long: MSQEKKVFKTEWANRPLSIETGQMAKQANGAVLVRYGDTVVLSTATASKEPRDGDFFPLMVNYEEKMYAAGKIPGGFKKREGRPADEATLTARLIDRPIRPLFPKGYRHDVQIINMVLSADPDCSPEMAAMIGSSMALSVSDIPFQGPIAGVNVGYIDGEYVINPTVEQKEVSRLDLEVAGHRDAVNMVEAGASEITEKEMLDAIFFGHEEIKRLVDFQQEIIDYLQPEKTEFIPKERNAEVEEKVTALTEEKGLKDAIQTFDKKEREENIDAIRDEVVAEFEDEENPDNDEVIAEVNSILNDLVKEEVRRQIADEKVRPDGRKPDEIRPLDSEVGLLPRAHGSGLFTRGQTQALSVLTLGAMSEYQLIDGLGTEEEKRFMHHYNFPNFSVGETGPVRAPGRREIGHGALGERALRYIIPDTKDFPYTVRIVSEVLESNGSSSQASICGSTLALMDAGVPIKAPVAGIAMGLVTRDDNYTILTDIQGMEDALGDMDFKVAGTEKGITAIQMDIKIDGLTREIIEEALEQARVGRLTILNHMLETIDQPRPELSAYAPKVETMTIKPEKIRDVIGPGGKKINEIIDETGVKLDIEQDGTIFIGAVDQDMINRAREIIEDITREAEVGQVYNAKVRRIEKYGTFVELFPGKDALLHISQIANQRINKVEDVLKLGDTIEVKVTEIDDKGRVNASHRALLNKED.

Asp-490 and Asp-496 together coordinate Mg(2+). In terms of domain architecture, KH spans Pro-557–Ile-616. Residues Gly-626 to Arg-694 enclose the S1 motif domain.

This sequence belongs to the polyribonucleotide nucleotidyltransferase family. The cofactor is Mg(2+).

Its subcellular location is the cytoplasm. The catalysed reaction is RNA(n+1) + phosphate = RNA(n) + a ribonucleoside 5'-diphosphate. In terms of biological role, involved in mRNA degradation. Catalyzes the phosphorolysis of single-stranded polyribonucleotides processively in the 3'- to 5'-direction. In Staphylococcus carnosus (strain TM300), this protein is Polyribonucleotide nucleotidyltransferase.